A 446-amino-acid polypeptide reads, in one-letter code: Na(+)-translocating NADH-quinone reductase subunit A (446 aa).

Belongs to the NqrA family. As to quaternary structure, composed of six subunits; NqrA, NqrB, NqrC, NqrD, NqrE and NqrF.

The catalysed reaction is a ubiquinone + n Na(+)(in) + NADH + H(+) = a ubiquinol + n Na(+)(out) + NAD(+). NQR complex catalyzes the reduction of ubiquinone-1 to ubiquinol by two successive reactions, coupled with the transport of Na(+) ions from the cytoplasm to the periplasm. NqrA to NqrE are probably involved in the second step, the conversion of ubisemiquinone to ubiquinol. The protein is Na(+)-translocating NADH-quinone reductase subunit A of Aliivibrio salmonicida (strain LFI1238) (Vibrio salmonicida (strain LFI1238)).